Reading from the N-terminus, the 360-residue chain is Probable cinnamyl alcohol dehydrogenase 1 (360 aa).

C47 contacts Zn(2+). T49 is an NADP(+) binding site. The Zn(2+) site is built by H69, E70, C100, C103, C106, C114, and C163. NADP(+) is bound by residues T167, 189-194 (GLGGVG), 212-217 (SSSDKK), T252, G276, and 299-301 (SFI).

This sequence belongs to the zinc-containing alcohol dehydrogenase family. As to quaternary structure, homodimer. It depends on Zn(2+) as a cofactor.

It carries out the reaction (E)-cinnamyl alcohol + NADP(+) = (E)-cinnamaldehyde + NADPH + H(+). The enzyme catalyses (E)-coniferol + NADP(+) = (E)-coniferaldehyde + NADPH + H(+). It catalyses the reaction (E)-sinapyl alcohol + NADP(+) = (E)-sinapaldehyde + NADPH + H(+). The catalysed reaction is (E)-4-coumaroyl alcohol + NADP(+) = (E)-4-coumaraldehyde + NADPH + H(+). It carries out the reaction (E)-caffeyl alcohol + NADP(+) = (E)-caffeyl aldehyde + NADPH + H(+). It functions in the pathway aromatic compound metabolism; phenylpropanoid biosynthesis. In terms of biological role, involved in lignin biosynthesis. Catalyzes the final step specific for the production of lignin monomers. Catalyzes the NADPH-dependent reduction of coniferaldehyde, 5-hydroxyconiferaldehyde, sinapaldehyde, 4-coumaraldehyde and caffeyl aldehyde to their respective alcohols. The protein is Probable cinnamyl alcohol dehydrogenase 1 (CAD1) of Aralia cordata (Udo).